The following is a 760-amino-acid chain: Catecholate siderophore receptor Fiu (760 aa).

Residues 1–31 (MENNRNFPARQFHSLTFFAGLCIGITPVAQA) form the signal peptide. Residues 67 to 175 (PVADTTRTMT…PTGSINMISK (109 aa)) enclose the TBDR plug domain. Residues 180 to 760 (DSGIDASASI…TFLLTANMHF (581 aa)) enclose the TBDR beta-barrel domain. The short motif at 743 to 760 (RYHPGEPRTFLLTANMHF) is the TonB C-terminal box element.

Belongs to the TonB-dependent receptor family.

The protein resides in the cell outer membrane. In terms of biological role, involved in the active transport across the outer membrane of iron complexed with catecholate siderophores such as dihydroxybenzoylserine and dihydroxybenzoate. It derives its energy for transport by interacting with the trans-periplasmic membrane protein TonB. Can also transport catechol-substituted cephalosporins. Receptor for microcins M, H47 and E492. The polypeptide is Catecholate siderophore receptor Fiu (fiu) (Escherichia coli O157:H7).